A 111-amino-acid polypeptide reads, in one-letter code: MPPLSESEFLALATQELDRIEATVEAAADAADADIEISRTGNVMELEFENGTKIIINSQAPMQELWVAARAGGFHFRRDGERWIDTRNGGELYAALSGYVSEQAGAALTLG.

The protein belongs to the frataxin family.

Its function is as follows. Involved in iron-sulfur (Fe-S) cluster assembly. May act as a regulator of Fe-S biogenesis. This chain is Iron-sulfur cluster assembly protein CyaY, found in Cupriavidus necator (strain ATCC 17699 / DSM 428 / KCTC 22496 / NCIMB 10442 / H16 / Stanier 337) (Ralstonia eutropha).